An 81-amino-acid polypeptide reads, in one-letter code: Cortexin-2 (81 aa).

The helical transmembrane segment at 29–49 (TGFAFVGILCIFLGLLIIRCF) threads the bilayer.

Belongs to the cortexin family.

It is found in the membrane. In Homo sapiens (Human), this protein is Cortexin-2 (CTXN2).